The chain runs to 68 residues: Cytotoxic linear peptide IsCT (68 aa).

An N-terminal signal peptide occupies residues 1–23; the sequence is MKTQFAILLVALVLFQMFAQSDA. At F36 the chain carries Phenylalanine amide. Residues 40–68 constitute a propeptide that is removed on maturation; that stretch reads GLSDLDGLDELFDGEISKADRDFLRELMR.

Belongs to the non-disulfide-bridged peptide (NDBP) superfamily. Short antimicrobial peptide (group 4) family. In terms of processing, isCTf is an enzymatic proteolytic cleavage product of IsCT by the proteases present in the venom. In terms of tissue distribution, expressed by the venom gland.

It localises to the secreted. The protein localises to the target cell membrane. Shows weak hemolytic activity and antibacterial activity against both Gram-positive and Gram-negative bacteria probably by forming pores in the cell membrane. IsCT adopts an amphipathic alpha-helical structure. Its function is as follows. Shows neither hemolytic, nor antibacterial activities, probably because it cannot adopt amphipathic alpha-helical structure. The chain is Cytotoxic linear peptide IsCT from Opisthacanthus madagascariensis (Scorpion).